We begin with the raw amino-acid sequence, 371 residues long: S-adenosylmethionine:tRNA ribosyltransferase-isomerase (371 aa).

This sequence belongs to the QueA family. In terms of assembly, monomer.

The protein localises to the cytoplasm. It catalyses the reaction 7-aminomethyl-7-carbaguanosine(34) in tRNA + S-adenosyl-L-methionine = epoxyqueuosine(34) in tRNA + adenine + L-methionine + 2 H(+). It functions in the pathway tRNA modification; tRNA-queuosine biosynthesis. Transfers and isomerizes the ribose moiety from AdoMet to the 7-aminomethyl group of 7-deazaguanine (preQ1-tRNA) to give epoxyqueuosine (oQ-tRNA). This chain is S-adenosylmethionine:tRNA ribosyltransferase-isomerase, found in Prochlorococcus marinus (strain MIT 9313).